A 415-amino-acid polypeptide reads, in one-letter code: Phosphoglycerate kinase (415 aa).

Substrate is bound by residues D27–N29, R44, H67–R70, R124, and R164. ATP contacts are provided by residues E336 and G362–M365.

This sequence belongs to the phosphoglycerate kinase family. In terms of assembly, monomer.

Its subcellular location is the cytoplasm. It carries out the reaction (2R)-3-phosphoglycerate + ATP = (2R)-3-phospho-glyceroyl phosphate + ADP. It functions in the pathway carbohydrate degradation; glycolysis; pyruvate from D-glyceraldehyde 3-phosphate: step 2/5. This chain is Phosphoglycerate kinase, found in Sulfolobus acidocaldarius (strain ATCC 33909 / DSM 639 / JCM 8929 / NBRC 15157 / NCIMB 11770).